The primary structure comprises 179 residues: Putative cleavage and polyadenylation specificity factor subunit 4-like protein (179 aa).

5 C3H1-type zinc fingers span residues Lys-35 to Arg-61, Gly-62 to Asp-89, Leu-90 to Pro-117, Ala-118 to Arg-145, and Ile-146 to Arg-169.

The protein belongs to the CPSF4/YTH1 family.

This is Putative cleavage and polyadenylation specificity factor subunit 4-like protein (CPSF4L) from Homo sapiens (Human).